Here is a 93-residue protein sequence, read N- to C-terminus: MKSTTLFMVSCVLIFCVLSHVREVKSVETKAKRVKKVCEKAQVFEQNCGWDGNKTCIRGFNKIKEYPFHCECGIYDAPNSRRICKCKFPYSPC.

The first 19 residues, 1-19, serve as a signal peptide directing secretion; it reads MKSTTLFMVSCVLIFCVLS. Disulfide bonds link Cys-38–Cys-93, Cys-48–Cys-72, Cys-56–Cys-84, and Cys-70–Cys-86.

The protein belongs to the DEFL family. As to expression, flower buds.

It is found in the secreted. This chain is Defensin-like protein 229 (SCRL27), found in Arabidopsis thaliana (Mouse-ear cress).